A 210-amino-acid polypeptide reads, in one-letter code: Uracil phosphoribosyltransferase (210 aa).

5-phospho-alpha-D-ribose 1-diphosphate-binding positions include Arg78, Arg103, and 130–138 (DPMLATGGS). Residues Ile195 and 200-202 (GDA) each bind uracil. A 5-phospho-alpha-D-ribose 1-diphosphate-binding site is contributed by Asp201.

This sequence belongs to the UPRTase family. It depends on Mg(2+) as a cofactor.

The enzyme catalyses UMP + diphosphate = 5-phospho-alpha-D-ribose 1-diphosphate + uracil. The protein operates within pyrimidine metabolism; UMP biosynthesis via salvage pathway; UMP from uracil: step 1/1. With respect to regulation, allosterically activated by GTP. Its function is as follows. Catalyzes the conversion of uracil and 5-phospho-alpha-D-ribose 1-diphosphate (PRPP) to UMP and diphosphate. This Leifsonia xyli subsp. xyli (strain CTCB07) protein is Uracil phosphoribosyltransferase.